The primary structure comprises 201 residues: Recombination protein RecR (201 aa).

Residues 57 to 72 (CQVCYSLSDNDICDIC) form a C4-type zinc finger. The Toprim domain occupies 80–177 (NKICIVESYP…RITRITYGIS (98 aa)).

It belongs to the RecR family.

In terms of biological role, may play a role in DNA repair. It seems to be involved in an RecBC-independent recombinational process of DNA repair. It may act with RecF and RecO. This chain is Recombination protein RecR, found in Brachyspira hyodysenteriae (strain ATCC 49526 / WA1).